The primary structure comprises 121 residues: Met-lysine-1b (121 aa).

Residues 1–22 (MKSFVFALALIVAFACISESKS) form the signal peptide. Residues 23-69 (DHTGYEEEENLEDSELTDLVAAALLEELAEASEMDDLSYTEEAGGER) constitute a propeptide that is removed on maturation. M120 carries the methionine amide modification.

Expressed by the venom gland.

It is found in the secreted. Its function is as follows. Shows no antimicrobial activity against Gram-positive bacterium B.subtilis B-501 or Gram-negative bacterium E.coli DH5-alpha at concentrations up to 20 ug/ml. Shows no toxicity towards insect (S.carnaria) larvae. The polypeptide is Met-lysine-1b (Lachesana tarabaevi (Spider)).